Consider the following 287-residue polypeptide: MATPSQHDLRNDFRALLASGKCYYTASTFDPMSARIAADLGFEVGILGGSVASLQVLAAPDFALITLSEFTEQATRIGRVARLPIIADADHGYGNALNVMRTIVELERAGVAALTIEDTLLPAKYGHKSTDLIPVEEAVGKLKAALEARIDPIMSIIARTNAGQLSTEETISRVKAYQAVGVDGICMVGIRDFAHLEEISQHISIPIMLVAYDNPELRDRERLAANGVRIVVNGHAAYFAAIKATYDCLREQRGIAEGTLDASELSTRYSTLEENRVWANKYMDVQE.

S50 is a binding site for substrate. A Mg(2+)-binding site is contributed by D88. Positions 159 and 235 each coordinate substrate.

It belongs to the isocitrate lyase/PEP mutase superfamily. Oxaloacetate decarboxylase family. As to quaternary structure, homotetramer; dimer of dimers. Mg(2+) is required as a cofactor.

The enzyme catalyses oxaloacetate + H(+) = pyruvate + CO2. In terms of biological role, catalyzes the decarboxylation of oxaloacetate into pyruvate. Seems to play a role in maintaining cellular concentrations of bicarbonate and pyruvate. The sequence is that of Oxaloacetate decarboxylase from Marinomonas sp. (strain MWYL1).